A 493-amino-acid chain; its full sequence is MDQDGFHSIAWDDAPSSNPPLSAPSPSQSPFEEGFESISPSSAQPPASDQYEGYDNSKAGEAGDVGVTLDRRERLGGHEVDGSVWNGKWMDVQVREPAKEHEGSKDMYVSYAVKTETSLPTFRKPLTVVRRRFQDFVFLREHLVKNFPACVVPPIPDKHRLEYIKGDRFSPEFVERRRLDLQRFADRIARHPVLQRSQLVNDFLQSTEWSVAKHHHISHPPPESHASLIDSLSDTFINAFSRVRKPDARFVEMTEELERFEEGLTGVERVVGRGKSRVDDLAADYQDMAAAYQGLGYLESGITEPLNRFAEKMLDFSTLLKHMNNTTIEPFLSSSHSLLSYSATHRNVIKLRDQKQLDFEELSAYLSAIVSERDRLAALSSGHTAAPVGLGTYLRDQMDKLRGTDDIHTRRERMRKMDGKIKELQDAVTLAHETSNAFSEEVIKEHAYFELEKKQEMKDALQAYTDGQVEMLQQAMDDWDRIIPLLQRIRVDV.

The tract at residues 1-67 is disordered; sequence MDQDGFHSIA…KAGEAGDVGV (67 aa). Low complexity predominate over residues 37–48; that stretch reads SISPSSAQPPAS. In terms of domain architecture, PX spans 89–211; that stretch reads WMDVQVREPA…DFLQSTEWSV (123 aa). Positions 132, 158, and 177 each coordinate a 1,2-diacyl-sn-glycero-3-phospho-(1D-myo-inositol-3-phosphate).

The protein belongs to the sorting nexin family.

It localises to the cytoplasm. It is found in the cytosol. Its subcellular location is the preautophagosomal structure membrane. The protein localises to the endosome membrane. In terms of biological role, sorting nexin, involved in the separation or division of vacuoles throughout the entire life cycle of the cells. Involved in retrieval of late-Golgi SNAREs from post-Golgi endosomes to the trans-Golgi network, for cytoplasm to vacuole transport (Cvt), and autophagy of large cargos including mitophagy, pexophagy and glycophagy. The polypeptide is Sorting nexin-4 (SNX4) (Cryptococcus neoformans var. neoformans serotype D (strain B-3501A) (Filobasidiella neoformans)).